The sequence spans 365 residues: Terpene cyclase 4 (365 aa).

A compositionally biased stretch (pro residues) spans 1-11; the sequence is MVPSLITPPPS. Positions 1–20 are disordered; it reads MVPSLITPPPSRSGEATPQK. Asp118, Asn260, and Ser264 together coordinate Mg(2+). Residues 118-122 carry the D(D/E)XX(D/E) motif motif; sequence DDPFD. An NSE motif motif is present at residues 260 to 268; the sequence is NDLCSYRKD. Positions 341–348 match the WxxxxxRY motif motif; it reads WSLYTFRY. 2 residues coordinate (2E,6E)-farnesyl diphosphate: Arg347 and Tyr348.

This sequence belongs to the terpene synthase family. Homodimer. Mg(2+) is required as a cofactor.

The enzyme catalyses (2E,6E)-farnesyl diphosphate + H2O = koraiol + diphosphate. Its pathway is sesquiterpene biosynthesis. In terms of biological role, terpene cyclase that catalyzes the cyclization of farnesyl diphosphate (FPP) to the sesquiterpene koraiol. This chain is Terpene cyclase 4, found in Gibberella fujikuroi (strain CBS 195.34 / IMI 58289 / NRRL A-6831) (Bakanae and foot rot disease fungus).